Consider the following 513-residue polypeptide: Histidine ammonia-lyase (513 aa).

Positions 144 to 146 (ASG) form a cross-link, 5-imidazolinone (Ala-Gly). The residue at position 145 (serine 145) is a 2,3-didehydroalanine (Ser).

Belongs to the PAL/histidase family. Post-translationally, contains an active site 4-methylidene-imidazol-5-one (MIO), which is formed autocatalytically by cyclization and dehydration of residues Ala-Ser-Gly.

It localises to the cytoplasm. The enzyme catalyses L-histidine = trans-urocanate + NH4(+). It functions in the pathway amino-acid degradation; L-histidine degradation into L-glutamate; N-formimidoyl-L-glutamate from L-histidine: step 1/3. This chain is Histidine ammonia-lyase, found in Streptococcus pyogenes serotype M5 (strain Manfredo).